A 293-amino-acid chain; its full sequence is Kynurenine formamidase (293 aa).

Residues 84–88 carry the HGGXW motif; it reads HGGYW. The Nucleophile role is filled by Ser153. Residues Asp236 and His268 contribute to the active site.

The protein belongs to the kynurenine formamidase family. In terms of assembly, homodimer.

The protein resides in the cytoplasm. The protein localises to the cytosol. It is found in the nucleus. The enzyme catalyses N-formyl-L-kynurenine + H2O = L-kynurenine + formate + H(+). It functions in the pathway amino-acid degradation; L-tryptophan degradation via kynurenine pathway; L-kynurenine from L-tryptophan: step 2/2. Catalyzes the hydrolysis of N-formyl-L-kynurenine to L-kynurenine, the second step in the kynurenine pathway of tryptophan degradation. Kynurenine may be further oxidized to nicotinic acid, NAD(H) and NADP(H). Required for elimination of toxic metabolites. This Danio rerio (Zebrafish) protein is Kynurenine formamidase (afmid).